Consider the following 179-residue polypeptide: Large ribosomal subunit protein uL5 (179 aa).

Belongs to the universal ribosomal protein uL5 family. Part of the 50S ribosomal subunit; part of the 5S rRNA/L5/L18/L25 subcomplex. Contacts the 5S rRNA and the P site tRNA. Forms a bridge to the 30S subunit in the 70S ribosome.

Its function is as follows. This is one of the proteins that bind and probably mediate the attachment of the 5S RNA into the large ribosomal subunit, where it forms part of the central protuberance. In the 70S ribosome it contacts protein S13 of the 30S subunit (bridge B1b), connecting the 2 subunits; this bridge is implicated in subunit movement. Contacts the P site tRNA; the 5S rRNA and some of its associated proteins might help stabilize positioning of ribosome-bound tRNAs. The protein is Large ribosomal subunit protein uL5 of Synechococcus sp. (strain RCC307).